We begin with the raw amino-acid sequence, 570 residues long: Trans-cinnamate:CoA ligase, peroxisomal (570 aa).

The Microbody targeting signal signature appears at 568 to 570 (ARL).

This sequence belongs to the ATP-dependent AMP-binding enzyme family. Monomer. K(+) serves as cofactor. As to expression, mostly expressed in flower organs, with highest levels in corollas and petal limbs, and, to a lesser extent, in petal tubes, sepals, pistils, stamen, stigma, anthers and ovaries. Also present at low levels in leaves, stems and roots.

Its subcellular location is the peroxisome. It carries out the reaction (E)-4-coumarate + ATP + CoA = (E)-4-coumaroyl-CoA + AMP + diphosphate. It catalyses the reaction (E)-caffeate + ATP + CoA = (E)-caffeoyl-CoA + AMP + diphosphate. The catalysed reaction is (E)-cinnamate + ATP + CoA = (E)-cinnamoyl-CoA + AMP + diphosphate. It functions in the pathway phenylpropanoid metabolism; trans-cinnamate biosynthesis. It participates in phytoalexin biosynthesis; 3,4',5-trihydroxystilbene biosynthesis; 3,4',5-trihydroxystilbene from trans-4-coumarate: step 1/2. In terms of biological role, involved in the biosynthesis of floral volatile benzenoid/phenylpropanoid (FVBP) scent (e.g. benzylbenzoate, phenylethylbenzoate, and methylbenzoate). Catalyzes the formation of CoA esters of cinnamic acid, and, with lower efficiency, of 4-coumaric acid and caffeic acid. The sequence is that of Trans-cinnamate:CoA ligase, peroxisomal from Petunia hybrida (Petunia).